Consider the following 273-residue polypeptide: Shikimate kinase (273 aa).

85–95 (PVGKGLKSSSA) contacts ATP.

This sequence belongs to the GHMP kinase family. Archaeal shikimate kinase subfamily.

It localises to the cytoplasm. The catalysed reaction is shikimate + ATP = 3-phosphoshikimate + ADP + H(+). Its pathway is metabolic intermediate biosynthesis; chorismate biosynthesis; chorismate from D-erythrose 4-phosphate and phosphoenolpyruvate: step 5/7. This Pyrococcus furiosus (strain ATCC 43587 / DSM 3638 / JCM 8422 / Vc1) protein is Shikimate kinase.